We begin with the raw amino-acid sequence, 236 residues long: Transcriptional regulatory protein RprY (236 aa).

Positions 9–123 (RILLCEDDEN…ELTFRIEAIL (115 aa)) constitute a Response regulatory domain. 4-aspartylphosphate is present on D58. The segment at residues 134–231 (SNVYKIGKFT…IHGKGYKLIT (98 aa)) is a DNA-binding region (ompR/PhoB-type).

Phosphorylated by RprX.

Its subcellular location is the cytoplasm. In terms of biological role, member of the two-component regulatory system RprX/RprY. The chain is Transcriptional regulatory protein RprY (rprY) from Bacteroides fragilis (strain YCH46).